Consider the following 375-residue polypeptide: Protein abhd-3.2 (375 aa).

The AB hydrolase-1 domain occupies 108–203; the sequence is PIVVFLPGIT…ILWNYLAMTG (96 aa). Residues Ser-189, Asp-315, and His-344 each act as charge relay system in the active site.

Belongs to the AB hydrolase superfamily. AB hydrolase 4 family.

The protein is Protein abhd-3.2 of Caenorhabditis elegans.